A 137-amino-acid chain; its full sequence is Large ribosomal subunit protein uL16 (137 aa).

A compositionally biased stretch (basic residues) spans 1–21 (MLSPKKVKFRKRQKGRLKGKA). Residues 1–22 (MLSPKKVKFRKRQKGRLKGKAQ) form a disordered region.

Belongs to the universal ribosomal protein uL16 family. In terms of assembly, part of the 50S ribosomal subunit.

Its function is as follows. Binds 23S rRNA and is also seen to make contacts with the A and possibly P site tRNAs. In Maridesulfovibrio salexigens (strain ATCC 14822 / DSM 2638 / NCIMB 8403 / VKM B-1763) (Desulfovibrio salexigens), this protein is Large ribosomal subunit protein uL16.